A 552-amino-acid chain; its full sequence is Phosphoglucomutase (552 aa).

Ser143 functions as the Phosphoserine intermediate in the catalytic mechanism. 4 residues coordinate Mg(2+): Ser143, Asp295, Asp297, and Asp299.

This sequence belongs to the phosphohexose mutase family. It depends on Mg(2+) as a cofactor.

It catalyses the reaction alpha-D-glucose 1-phosphate = alpha-D-glucose 6-phosphate. The protein operates within glycolipid metabolism; diglucosyl-diacylglycerol biosynthesis. Functionally, catalyzes the interconversion between glucose-6-phosphate and alpha-glucose-1-phosphate. This is the first step in the biosynthesis of diglucosyl-diacylglycerol (Glc2-DAG), i.e. the predominant glycolipid found in the S.aureus membrane, which is also used as a membrane anchor for lipoteichoic acid (LTA). This Staphylococcus aureus (strain bovine RF122 / ET3-1) protein is Phosphoglucomutase (pgcA).